Here is a 217-residue protein sequence, read N- to C-terminus: Outer-membrane lipoprotein LolB (217 aa).

The N-terminal stretch at 1-20 is a signal peptide; sequence MSRAVRTLALGGLVLVGLSA. A lipid anchor (N-palmitoyl cysteine) is attached at C21. Residue C21 is the site of S-diacylglycerol cysteine attachment.

The protein belongs to the LolB family. As to quaternary structure, monomer.

The protein localises to the cell outer membrane. Functionally, plays a critical role in the incorporation of lipoproteins in the outer membrane after they are released by the LolA protein. This Xanthomonas euvesicatoria pv. vesicatoria (strain 85-10) (Xanthomonas campestris pv. vesicatoria) protein is Outer-membrane lipoprotein LolB.